The sequence spans 340 residues: 4-hydroxythreonine-4-phosphate dehydrogenase (340 aa).

Substrate-binding residues include histidine 141 and threonine 142. A divalent metal cation contacts are provided by histidine 171, histidine 216, and histidine 271. Lysine 279, asparagine 288, and arginine 297 together coordinate substrate.

This sequence belongs to the PdxA family. In terms of assembly, homodimer. Requires Zn(2+) as cofactor. Mg(2+) serves as cofactor. The cofactor is Co(2+).

The protein localises to the cytoplasm. The enzyme catalyses 4-(phosphooxy)-L-threonine + NAD(+) = 3-amino-2-oxopropyl phosphate + CO2 + NADH. It functions in the pathway cofactor biosynthesis; pyridoxine 5'-phosphate biosynthesis; pyridoxine 5'-phosphate from D-erythrose 4-phosphate: step 4/5. In terms of biological role, catalyzes the NAD(P)-dependent oxidation of 4-(phosphooxy)-L-threonine (HTP) into 2-amino-3-oxo-4-(phosphooxy)butyric acid which spontaneously decarboxylates to form 3-amino-2-oxopropyl phosphate (AHAP). The polypeptide is 4-hydroxythreonine-4-phosphate dehydrogenase (Desulforapulum autotrophicum (strain ATCC 43914 / DSM 3382 / VKM B-1955 / HRM2) (Desulfobacterium autotrophicum)).